The chain runs to 269 residues: Diaminopimelate epimerase (269 aa).

Substrate-binding residues include asparagine 15, glutamine 49, and asparagine 66. Cysteine 75 serves as the catalytic Proton donor. Residues glycine 76–asparagine 77, asparagine 155, asparagine 187, and glutamate 204–arginine 205 contribute to the substrate site. Residue cysteine 213 is the Proton acceptor of the active site. Glycine 214–serine 215 lines the substrate pocket.

It belongs to the diaminopimelate epimerase family. Homodimer.

It is found in the cytoplasm. The catalysed reaction is (2S,6S)-2,6-diaminopimelate = meso-2,6-diaminopimelate. It functions in the pathway amino-acid biosynthesis; L-lysine biosynthesis via DAP pathway; DL-2,6-diaminopimelate from LL-2,6-diaminopimelate: step 1/1. In terms of biological role, catalyzes the stereoinversion of LL-2,6-diaminopimelate (L,L-DAP) to meso-diaminopimelate (meso-DAP), a precursor of L-lysine and an essential component of the bacterial peptidoglycan. The sequence is that of Diaminopimelate epimerase from Rickettsia canadensis (strain McKiel).